Reading from the N-terminus, the 472-residue chain is Transcription factor TGAL1 (472 aa).

Residues 136 to 190 (WGESTIADTSPRTDTSTDPDTDERNQMFEQGQLAAPTASDSSDRSKDKLDHKTLR) form a disordered region. Positions 143–153 (DTSPRTDTSTD) are enriched in low complexity. Residues 176–187 (SSDRSKDKLDHK) show a composition bias toward basic and acidic residues. In terms of domain architecture, bZIP spans 185 to 229 (DHKTLRRLAQNREAARKSRLRKKAYIQNLESSRLKLTQIEQELQR). Residues 187-207 (KTLRRLAQNREAARKSRLRKK) form a basic motif region. The tract at residues 213-227 (LESSRLKLTQIEQEL) is leucine-zipper. A DOG1 domain is found at 252-469 (ALAFDMEYAR…RALSSLWLAR (218 aa)).

The protein belongs to the bZIP family. As to quaternary structure, isoforms 1 and 2 interact with NPR2/NH2. Isoform 2 interacts with NPR1/NH1 and NPR3/NH3.

The protein resides in the nucleus. In terms of biological role, transcriptional regulator involved in defense response. The sequence is that of Transcription factor TGAL1 from Oryza sativa subsp. japonica (Rice).